The following is a 490-amino-acid chain: CUGBP Elav-like family member 1 (490 aa).

RRM domains are found at residues 16-99 (IKMF…PADS) and 108-188 (RKLF…FADT). Positions 283–312 (PSAGSALTTSSSPLSILTSSGSSPSSNNNS) are disordered. In terms of domain architecture, RRM 3 spans 405–483 (ANLFIYHLPQ…KRLKVQLKRS (79 aa)).

Belongs to the CELF/BRUNOL family. Oligomer. Oligomerization is required for RNA-binding and EDEN-dependent deadenylation. In terms of processing, phosphorylated during oocyte maturation and dephosphorylated following egg activation. Dephosphorylation is calcium dependent and correlates with the increase in the activity of EDEN-dependent deadenylation.

It is found in the nucleus. The protein resides in the cytoplasm. In terms of biological role, RNA-binding protein implicated in the regulation of several post-transcriptional events. May be involved in pre-mRNA alternative splicing, mRNA translation activation and stability. Mediates the rapid and sequence-specific cytoplasmic deadenylation of EDEN-containing maternal mRNAs following fertilization. Binds to AU-rich sequences (AREs) of jun mRNA. Binds to the embryonic deadenylation element (EDEN) motif localized in the 3'-UTR of maternal mRNAs. Binds to RNA containing several repeats of the consensus sequence 5'-UGU-3'. EDEN-dependent deadenylation is enhanced by the presence of an additional cis element composed of three AUU repeats. This chain is CUGBP Elav-like family member 1 (celf1), found in Xenopus tropicalis (Western clawed frog).